Here is a 352-residue protein sequence, read N- to C-terminus: 4-hydroxy-3-methylbut-2-en-1-yl diphosphate synthase (flavodoxin) (352 aa).

[4Fe-4S] cluster-binding residues include C265, C268, C300, and E307.

The protein belongs to the IspG family. [4Fe-4S] cluster serves as cofactor.

It catalyses the reaction (2E)-4-hydroxy-3-methylbut-2-enyl diphosphate + oxidized [flavodoxin] + H2O + 2 H(+) = 2-C-methyl-D-erythritol 2,4-cyclic diphosphate + reduced [flavodoxin]. It participates in isoprenoid biosynthesis; isopentenyl diphosphate biosynthesis via DXP pathway; isopentenyl diphosphate from 1-deoxy-D-xylulose 5-phosphate: step 5/6. Functionally, converts 2C-methyl-D-erythritol 2,4-cyclodiphosphate (ME-2,4cPP) into 1-hydroxy-2-methyl-2-(E)-butenyl 4-diphosphate. In Persephonella marina (strain DSM 14350 / EX-H1), this protein is 4-hydroxy-3-methylbut-2-en-1-yl diphosphate synthase (flavodoxin).